Consider the following 41-residue polypeptide: Tachystatin-C (41 aa).

3 cysteine pairs are disulfide-bonded: Cys12-Cys28, Cys19-Cys33, and Cys27-Cys38.

As to expression, granular hemocytes, small secretory granules.

It localises to the secreted. Its function is as follows. Binds to chitin. Shows strong activity against E.coli (IC(50) is 1.2 ug/ml). Is also very active against S.aureus (IC(50) is 0.8 ug/ml), C.albicans (IC(50) is 0.9 ug/ml) and P.pastoris (IC(50) is 0.3 ug/ml). Binds to chitin (5.2 uM are required to obtain 50% of binding). Causes hemolysis on sheep erythrocytes, probably by forming ion-permeable pores. This is Tachystatin-C from Tachypleus tridentatus (Japanese horseshoe crab).